The primary structure comprises 149 residues: Transcriptional repressor NrdR (149 aa).

Residues 3–34 fold into a zinc finger; sequence CPFCTAVDTKVIDSRLVGDGSQVRRRRQCLVC. Residues 49-139 form the ATP-cone domain; it reads PRVVKSDEIR…VYRSFEDVRD (91 aa).

This sequence belongs to the NrdR family. Zn(2+) is required as a cofactor.

In terms of biological role, negatively regulates transcription of bacterial ribonucleotide reductase nrd genes and operons by binding to NrdR-boxes. This is Transcriptional repressor NrdR from Proteus mirabilis (strain HI4320).